Consider the following 379-residue polypeptide: Alcohol dehydrogenase 2 (379 aa).

C47, T49, H69, C99, C102, C105, C113, and C177 together coordinate Zn(2+). 2 residues coordinate an alcohol: T49 and H69. T49 serves as a coordination point for NAD(+). Residues 202–207, D226, K231, T272, V295, 295–297, F322, and R372 each bind NAD(+); these read GLGAVG and VGV.

The protein belongs to the zinc-containing alcohol dehydrogenase family. In terms of assembly, homodimer. Requires Zn(2+) as cofactor.

The protein localises to the cytoplasm. It carries out the reaction a primary alcohol + NAD(+) = an aldehyde + NADH + H(+). The enzyme catalyses a secondary alcohol + NAD(+) = a ketone + NADH + H(+). The chain is Alcohol dehydrogenase 2 (ADH2) from Zea mays (Maize).